The sequence spans 249 residues: Ubiquinone biosynthesis O-methyltransferase (249 aa).

The segment at 1 to 23 (MTSPSQVLPASAGKPTGPNADPK) is disordered. Positions 52, 71, 92, and 136 each coordinate S-adenosyl-L-methionine.

Belongs to the methyltransferase superfamily. UbiG/COQ3 family.

The catalysed reaction is a 3-demethylubiquinol + S-adenosyl-L-methionine = a ubiquinol + S-adenosyl-L-homocysteine + H(+). It catalyses the reaction a 3-(all-trans-polyprenyl)benzene-1,2-diol + S-adenosyl-L-methionine = a 2-methoxy-6-(all-trans-polyprenyl)phenol + S-adenosyl-L-homocysteine + H(+). Its pathway is cofactor biosynthesis; ubiquinone biosynthesis. Functionally, O-methyltransferase that catalyzes the 2 O-methylation steps in the ubiquinone biosynthetic pathway. The protein is Ubiquinone biosynthesis O-methyltransferase of Cupriavidus pinatubonensis (strain JMP 134 / LMG 1197) (Cupriavidus necator (strain JMP 134)).